Reading from the N-terminus, the 938-residue chain is Protein zds1 (938 aa).

Residues 1–13 (MSSSSVSNTLSIE) are compositionally biased toward polar residues. Disordered regions lie at residues 1-140 (MSSS…LDKE), 326-386 (HRGK…VENQ), and 424-807 (SENK…EPKT). The span at 40–54 (LSGSSSEPLENNSSL) shows a compositional bias: low complexity. Positions 57–67 (STDDPSVEIRS) are enriched in basic and acidic residues. Over residues 77–86 (NLLSDQNITI) the composition is skewed to polar residues. Low complexity predominate over residues 116 to 126 (SDAQSSVPSFS). Basic and acidic residues predominate over residues 127–140 (EIHDGMSEEELDKE). Composition is skewed to polar residues over residues 330 to 349 (TSTL…TDTS) and 370 to 380 (TSALSNSQNPS). Low complexity predominate over residues 429 to 440 (ESAVASESSLSE). Basic and acidic residues-rich tracts occupy residues 467–485 (NKAE…DKSE) and 512–556 (NKAE…KADD). A compositionally biased stretch (polar residues) spans 558-567 (LPSNNKTEGY). The segment covering 587–596 (VIPPRVPTPV) has biased composition (pro residues). Positions 622 to 635 (SSKKPEIFHERHIP) are enriched in basic and acidic residues. Residues 642–669 (NKPSKNNILKSTQVPVTPKQKSSTANKG) are compositionally biased toward polar residues. Over residues 702 to 711 (KEHKKDKQKK) the composition is skewed to basic residues. Low complexity predominate over residues 715 to 725 (QISSSSKSASS). Over residues 798–807 (SDEKSTEPKT) the composition is skewed to basic and acidic residues.

It is found in the cytoplasm. In terms of biological role, has a role in establishing cell polarity. Also required for maintenance of cell wall integrity, sexual differentiation, calcium tolerance and cell morphology. Involved in Ras-MAPK signaling pathway at cell cortex. Has a role in meiosis. This chain is Protein zds1 (zds1), found in Schizosaccharomyces pombe (strain 972 / ATCC 24843) (Fission yeast).